Consider the following 542-residue polypeptide: CTP synthase (542 aa).

The amidoligase domain stretch occupies residues 1–265; sequence MARYVFITGG…DDEVLAAFGI (265 aa). S13 is a CTP binding site. A UTP-binding site is contributed by S13. ATP is bound by residues 14–19 and D71; that span reads SLGKGI. 2 residues coordinate Mg(2+): D71 and E139. Residues 146 to 148, 186 to 191, and K222 each bind CTP; these read DIE and KTKPTQ. UTP is bound by residues 186 to 191 and K222; that span reads KTKPTQ. Residues 291–541 enclose the Glutamine amidotransferase type-1 domain; sequence TIAIVGKYTG…IEAATEQSRL (251 aa). G353 contacts L-glutamine. The Nucleophile; for glutamine hydrolysis role is filled by C380. L-glutamine contacts are provided by residues 381 to 384, E404, and R469; that span reads FGMQ. Catalysis depends on residues H514 and E516.

This sequence belongs to the CTP synthase family. Homotetramer.

It catalyses the reaction UTP + L-glutamine + ATP + H2O = CTP + L-glutamate + ADP + phosphate + 2 H(+). The enzyme catalyses L-glutamine + H2O = L-glutamate + NH4(+). It carries out the reaction UTP + NH4(+) + ATP = CTP + ADP + phosphate + 2 H(+). The protein operates within pyrimidine metabolism; CTP biosynthesis via de novo pathway; CTP from UDP: step 2/2. Allosterically activated by GTP, when glutamine is the substrate; GTP has no effect on the reaction when ammonia is the substrate. The allosteric effector GTP functions by stabilizing the protein conformation that binds the tetrahedral intermediate(s) formed during glutamine hydrolysis. Inhibited by the product CTP, via allosteric rather than competitive inhibition. In terms of biological role, catalyzes the ATP-dependent amination of UTP to CTP with either L-glutamine or ammonia as the source of nitrogen. Regulates intracellular CTP levels through interactions with the four ribonucleotide triphosphates. The polypeptide is CTP synthase (Rhizobium etli (strain ATCC 51251 / DSM 11541 / JCM 21823 / NBRC 15573 / CFN 42)).